A 184-amino-acid chain; its full sequence is Gremlin-1 (184 aa).

The signal sequence occupies residues 1–24 (MNRTAYTVGALLLLLGTLLPAAEG). 2 N-linked (GlcNAc...) asparagine glycosylation sites follow: asparagine 2 and asparagine 42. The tract at residues 24-78 (GKKKGSQGAIPPPDKAQHNDSEQTQSPPQPGSRTRGRGQGRGTAMPGEEVLESSQ) is disordered. 4 disulfide bridges follow: cysteine 94-cysteine 144, cysteine 108-cysteine 158, cysteine 118-cysteine 176, and cysteine 122-cysteine 178. The 91-residue stretch at 94–184 (CKTQPLKQTI…QCRCISIDLD (91 aa)) folds into the CTCK domain.

Belongs to the DAN family. As to quaternary structure, homodimer; can also form homooligomers. Interacts with BMP2; can form higher oligomers with BMP2. Interacts with SLIT1 and SLIT2 in a glycosylation-dependent manner. As to expression, highly expressed in the brain, kidney, spleen, and testis and weakly expressed in the lung and liver. Predominantly expressed in differentiated cells as neurons in brain, type I cells in lung and globlet cells in intestine.

The protein localises to the secreted. In terms of biological role, cytokine that may play an important role during carcinogenesis and metanephric kidney organogenesis, as a BMP antagonist required for early limb outgrowth and patterning in maintaining the FGF4-SHH feedback loop. Down-regulates the BMP4 signaling in a dose-dependent manner. Antagonist of BMP2; inhibits BMP2-mediated differentiation of osteoblasts (in vitro). Acts as inhibitor of monocyte chemotaxis. Can inhibit the growth or viability of normal cells but not transformed cells when is overexpressed. The sequence is that of Gremlin-1 (Grem1) from Rattus norvegicus (Rat).